The chain runs to 401 residues: Heat stress transcription factor A-4a (401 aa).

The DNA-binding element occupies Leu13–Pro107. The tract at residues Pro122–Leu188 is hydrophobic repeat HR-A/B. The Nuclear localization signal motif lies at Arg207 to Arg213. Positions Ile256 to Asp265 match the AHA1 motif. The AHA2 motif lies at Asp341 to Glu350. The disordered stretch occupies residues Asn351–Val373. Residues Glu356 to Val373 show a composition bias toward basic and acidic residues. Residues Ile388–Leu395 carry the Nuclear export signal motif.

The protein belongs to the HSF family. Class A subfamily. As to quaternary structure, homotrimer. Post-translationally, exhibits temperature-dependent phosphorylation.

It localises to the cytoplasm. It is found in the nucleus. Transcriptional activator that specifically binds DNA sequence 5'-AGAAnnTTCT-3' known as heat shock promoter elements (HSE). This is Heat stress transcription factor A-4a (HSFA4A) from Arabidopsis thaliana (Mouse-ear cress).